Consider the following 177-residue polypeptide: Interleukin-10 (177 aa).

An N-terminal signal peptide occupies residues 1 to 19 (MPSSSAVLCCLVFLAGVAA). 2 disulfides stabilise this stretch: C31/C127 and C81/C133. The N-linked (GlcNAc...) asparagine glycan is linked to N135.

Belongs to the IL-10 family. As to quaternary structure, homodimer. Interacts with IL10RA and IL10RB.

It is found in the secreted. Major immune regulatory cytokine that acts on many cells of the immune system where it has profound anti-inflammatory functions, limiting excessive tissue disruption caused by inflammation. Mechanistically, IL10 binds to its heterotetrameric receptor comprising IL10RA and IL10RB leading to JAK1 and STAT2-mediated phosphorylation of STAT3. In turn, STAT3 translocates to the nucleus where it drives expression of anti-inflammatory mediators. Targets antigen-presenting cells (APCs) such as macrophages and monocytes and inhibits their release of pro-inflammatory cytokines including granulocyte-macrophage colony-stimulating factor /GM-CSF, granulocyte colony-stimulating factor/G-CSF, IL-1 alpha, IL-1 beta, IL-6, IL-8 and TNF-alpha. Also interferes with antigen presentation by reducing the expression of MHC-class II and co-stimulatory molecules, thereby inhibiting their ability to induce T cell activation. In addition, controls the inflammatory response of macrophages by reprogramming essential metabolic pathways including mTOR signaling. In Ovis aries (Sheep), this protein is Interleukin-10 (IL10).